Here is a 307-residue protein sequence, read N- to C-terminus: Oxygen-dependent coproporphyrinogen-III oxidase (307 aa).

Ser-99 contributes to the substrate binding site. Residues His-103 and His-113 each contribute to the a divalent metal cation site. The Proton donor role is filled by His-113. 115 to 117 lines the substrate pocket; sequence NVR. A divalent metal cation is bound by residues His-152 and His-182. The important for dimerization stretch occupies residues 247-282; the sequence is YVEFNLVFDRGTLFGLQSGGRTESILMSMPPVVNWR. 265-267 contacts substrate; it reads GGR.

Belongs to the aerobic coproporphyrinogen-III oxidase family. Homodimer. A divalent metal cation serves as cofactor.

It is found in the cytoplasm. It catalyses the reaction coproporphyrinogen III + O2 + 2 H(+) = protoporphyrinogen IX + 2 CO2 + 2 H2O. It functions in the pathway porphyrin-containing compound metabolism; protoporphyrin-IX biosynthesis; protoporphyrinogen-IX from coproporphyrinogen-III (O2 route): step 1/1. Its function is as follows. Involved in the heme biosynthesis. Catalyzes the aerobic oxidative decarboxylation of propionate groups of rings A and B of coproporphyrinogen-III to yield the vinyl groups in protoporphyrinogen-IX. In Paraburkholderia xenovorans (strain LB400), this protein is Oxygen-dependent coproporphyrinogen-III oxidase.